A 792-amino-acid polypeptide reads, in one-letter code: Carboxysome assembly protein CsoS2 (792 aa).

Residues 1 to 15 are compositionally biased toward basic and acidic residues; that stretch reads MAKQSSRELALERRK. An N-terminal domain region spans residues 1–235; that stretch reads MAKQSSRELA…EISQRVRELR (235 aa). 3 disordered regions span residues 1 to 259, 280 to 299, and 338 to 359; these read MAKQ…RNGS, QVVT…NEAS, and HGNR…DEPG. Residues 7-22 form an N-repeat 1 repeat; sequence RELALERRKALSNSGK. Polar residues-rich tracts occupy residues 17-36 and 69-82; these read LSNS…NRIR and DTSF…SGAS. Residues 94–109 form an N-repeat 2 repeat; sequence RELVLARRDELSRRGQ. Basic and acidic residues-rich tracts occupy residues 97 to 106 and 113 to 126; these read VLARRDELSR and KSKD…EKIS. A compositionally biased stretch (polar residues) spans 161–175; it reads DTVSRLSSRNSTSRP. N-repeat repeat units lie at residues 187-202 and 225-240; these read RALV…KHGK and REIS…KSGA. Residues 218–236 show a composition bias toward basic and acidic residues; that stretch reads GDPDLSSREISQRVRELRS. Positions 240-615 are middle region; it reads ATGKKRSGAC…VQACGSDAPA (376 aa). M-repeat repeat units follow at residues 270–319, 330–379, 388–427, 441–490, 500–549, and 560–609; these read KVGL…DTFC, KVAV…NQYC, KVGQ…GDQY, KVGS…NTFC, KVGL…SGWC, and RTPK…VQAC. 2 disordered regions span residues 608–662 and 687–792; these read ACGS…GSQI and HFKS…GARG. A C-terminal domain region spans residues 616-792; sequence GSNDHQGSSE…LITVSGGARG (177 aa). Polar residues-rich tracts occupy residues 618 to 636 and 651 to 662; these read NDHQ…SVQS and VTGTSYEQGSQI. C-repeat repeat units follow at residues 633 to 678 and 703 to 738; these read SVQS…GTEQ and TRPE…EGAS. A C-terminal peptide (CTP) region spans residues 763–792; sequence EVSQPMSRVTGSSGNTDQGSLITVSGGARG. The span at 764–785 shows a compositional bias: polar residues; the sequence is VSQPMSRVTGSSGNTDQGSLIT.

Belongs to the CsoS2 family. In terms of assembly, probably interacts with the carboxysome major shell protein CsoS1 via the N-terminal domain; this complex probably also interacts with RuBisCO. Post-translationally, has been suggested to undergo ribosomal frameshifting, as does its ortholog in H.neapolitanus. The exact position of the putative frameshift is not given, but it would probably occur in the sixth M-repeat and remove the C-terminus.

Its subcellular location is the carboxysome. Its function is as follows. Required for alpha-carboxysome (Cb) assembly, mediates interaction between RuBisCO and the Cb shell. The protein is probably intrinsically disordered. The C-terminal repeats act as the encapsulation signal to target proteins to the Cb; they are necessary and sufficient to target both CsoS2 and foreign proteins to the Cb. The N-terminal repeats of this protein bind simultaneously to both subunits of RuBisCO. Probably also interacts with the major shell proteins (CsoS1); that interaction would increase the local concentration of CsoS2 so that it can condense RuBisCO and full carboxysomes can be formed. This Prochlorococcus marinus (strain MIT 9313) protein is Carboxysome assembly protein CsoS2.